A 629-amino-acid polypeptide reads, in one-letter code: tRNA uridine 5-carboxymethylaminomethyl modification enzyme MnmG (629 aa).

Residues 13 to 18 (GGGHAG), Val-125, and Ser-180 contribute to the FAD site. 273 to 287 (GPRYCPSIEDKVMRF) contacts NAD(+). An FAD-binding site is contributed by Gln-370.

Belongs to the MnmG family. As to quaternary structure, homodimer. Heterotetramer of two MnmE and two MnmG subunits. FAD is required as a cofactor.

The protein localises to the cytoplasm. NAD-binding protein involved in the addition of a carboxymethylaminomethyl (cmnm) group at the wobble position (U34) of certain tRNAs, forming tRNA-cmnm(5)s(2)U34. The protein is tRNA uridine 5-carboxymethylaminomethyl modification enzyme MnmG of Serratia proteamaculans (strain 568).